Here is a 415-residue protein sequence, read N- to C-terminus: Serine hydroxymethyltransferase 1 (415 aa).

Residues Leu122 and 126 to 128 (GHL) contribute to the (6S)-5,6,7,8-tetrahydrofolate site. Lys230 carries the post-translational modification N6-(pyridoxal phosphate)lysine.

The protein belongs to the SHMT family. In terms of assembly, homodimer. Requires pyridoxal 5'-phosphate as cofactor.

The protein resides in the cytoplasm. It catalyses the reaction (6R)-5,10-methylene-5,6,7,8-tetrahydrofolate + glycine + H2O = (6S)-5,6,7,8-tetrahydrofolate + L-serine. It functions in the pathway one-carbon metabolism; tetrahydrofolate interconversion. Its pathway is amino-acid biosynthesis; glycine biosynthesis; glycine from L-serine: step 1/1. In terms of biological role, catalyzes the reversible interconversion of serine and glycine with tetrahydrofolate (THF) serving as the one-carbon carrier. This reaction serves as the major source of one-carbon groups required for the biosynthesis of purines, thymidylate, methionine, and other important biomolecules. Also exhibits THF-independent aldolase activity toward beta-hydroxyamino acids, producing glycine and aldehydes, via a retro-aldol mechanism. This chain is Serine hydroxymethyltransferase 1, found in Ralstonia nicotianae (strain ATCC BAA-1114 / GMI1000) (Ralstonia solanacearum).